The following is a 458-amino-acid chain: ATP synthase subunit beta (458 aa).

148-155 (GGAGVGKT) is a binding site for ATP.

Belongs to the ATPase alpha/beta chains family. In terms of assembly, F-type ATPases have 2 components, CF(1) - the catalytic core - and CF(0) - the membrane proton channel. CF(1) has five subunits: alpha(3), beta(3), gamma(1), delta(1), epsilon(1). CF(0) has three main subunits: a(1), b(2) and c(9-12). The alpha and beta chains form an alternating ring which encloses part of the gamma chain. CF(1) is attached to CF(0) by a central stalk formed by the gamma and epsilon chains, while a peripheral stalk is formed by the delta and b chains.

The protein localises to the cell inner membrane. It catalyses the reaction ATP + H2O + 4 H(+)(in) = ADP + phosphate + 5 H(+)(out). Its function is as follows. Produces ATP from ADP in the presence of a proton gradient across the membrane. The catalytic sites are hosted primarily by the beta subunits. This is ATP synthase subunit beta from Pseudomonas fluorescens (strain SBW25).